We begin with the raw amino-acid sequence, 495 residues long: Phosphomethylpyrimidine synthase (495 aa).

Residues N125, M154, Y183, H219, 239-241 (SRG), 280-283 (DGLR), and E319 each bind substrate. H323 serves as a coordination point for Zn(2+). Y346 contributes to the substrate binding site. H387 contributes to the Zn(2+) binding site. [4Fe-4S] cluster is bound by residues C467, C470, and C475.

The protein belongs to the ThiC family. [4Fe-4S] cluster serves as cofactor.

It carries out the reaction 5-amino-1-(5-phospho-beta-D-ribosyl)imidazole + S-adenosyl-L-methionine = 4-amino-2-methyl-5-(phosphooxymethyl)pyrimidine + CO + 5'-deoxyadenosine + formate + L-methionine + 3 H(+). The protein operates within cofactor biosynthesis; thiamine diphosphate biosynthesis. Functionally, catalyzes the synthesis of the hydroxymethylpyrimidine phosphate (HMP-P) moiety of thiamine from aminoimidazole ribotide (AIR) in a radical S-adenosyl-L-methionine (SAM)-dependent reaction. This is Phosphomethylpyrimidine synthase from Leptospira interrogans serogroup Icterohaemorrhagiae serovar copenhageni (strain Fiocruz L1-130).